Reading from the N-terminus, the 81-residue chain is Putative phytosulfokines 6 (81 aa).

The signal sequence occupies residues 1-20 (MKQSLCLAVLFLILSTSSSA). The propeptide occupies 21 to 72 (IRRGKEDQEINPLVSATSVEEDSVNKLMGMEYCGEGDEECLRRRMMTESHLD). Residues Tyr73 and Tyr75 each carry the sulfotyrosine modification. The propeptide occupies 78–81 (HHKH).

It belongs to the phytosulfokine family. In terms of processing, sulfation is important for activity and for the binding to a putative membrane receptor. PSK-beta is an enzymatic derivative of PSK-alpha. In terms of tissue distribution, expressed in roots, leaves, stems, flowers and siliques. Most abundant in vascular bundles and in root tips.

It is found in the secreted. Promotes plant cell differentiation, organogenesis and somatic embryogenesis as well as cell proliferation. This chain is Putative phytosulfokines 6 (PSK6), found in Arabidopsis thaliana (Mouse-ear cress).